Reading from the N-terminus, the 336-residue chain is uncharacterized protein (336 aa).

29-36 (GPKSSGKS) serves as a coordination point for ATP.

This sequence belongs to the archaeal ATPase family.

This is an uncharacterized protein from Methanocaldococcus jannaschii (strain ATCC 43067 / DSM 2661 / JAL-1 / JCM 10045 / NBRC 100440) (Methanococcus jannaschii).